The chain runs to 198 residues: Ribonuclease HII (198 aa).

Positions histidine 14–valine 198 constitute an RNase H type-2 domain. A divalent metal cation contacts are provided by aspartate 20, glutamate 21, and aspartate 110.

This sequence belongs to the RNase HII family. It depends on Mn(2+) as a cofactor. The cofactor is Mg(2+).

It is found in the cytoplasm. The catalysed reaction is Endonucleolytic cleavage to 5'-phosphomonoester.. Endonuclease that specifically degrades the RNA of RNA-DNA hybrids. The polypeptide is Ribonuclease HII (Sphingopyxis alaskensis (strain DSM 13593 / LMG 18877 / RB2256) (Sphingomonas alaskensis)).